The following is a 181-amino-acid chain: Large ribosomal subunit protein eL18 (181 aa).

The protein belongs to the eukaryotic ribosomal protein eL18 family.

Its subcellular location is the cytoplasm. The chain is Large ribosomal subunit protein eL18 (rpl18) from Dictyostelium discoideum (Social amoeba).